A 309-amino-acid polypeptide reads, in one-letter code: tRNA dimethylallyltransferase (309 aa).

11 to 18 (GPTATGKS) is an ATP binding site. 13-18 (TATGKS) lines the substrate pocket.

It belongs to the IPP transferase family. Monomer. Requires Mg(2+) as cofactor.

The catalysed reaction is adenosine(37) in tRNA + dimethylallyl diphosphate = N(6)-dimethylallyladenosine(37) in tRNA + diphosphate. Its function is as follows. Catalyzes the transfer of a dimethylallyl group onto the adenine at position 37 in tRNAs that read codons beginning with uridine, leading to the formation of N6-(dimethylallyl)adenosine (i(6)A). This chain is tRNA dimethylallyltransferase, found in Rhodococcus jostii (strain RHA1).